A 299-amino-acid chain; its full sequence is Pantothenate synthetase (299 aa).

41-48 contacts ATP; it reads MGALHEGH. The Proton donor role is filled by His-48. Gln-72 is a (R)-pantoate binding site. Residue Gln-72 participates in beta-alanine binding. Residue 158-161 coordinates ATP; it reads GQKD. Gln-164 contributes to the (R)-pantoate binding site. Residues Val-187 and 195 to 198 contribute to the ATP site; that span reads MSSR.

This sequence belongs to the pantothenate synthetase family. Homodimer.

It localises to the cytoplasm. It catalyses the reaction (R)-pantoate + beta-alanine + ATP = (R)-pantothenate + AMP + diphosphate + H(+). The protein operates within cofactor biosynthesis; (R)-pantothenate biosynthesis; (R)-pantothenate from (R)-pantoate and beta-alanine: step 1/1. Functionally, catalyzes the condensation of pantoate with beta-alanine in an ATP-dependent reaction via a pantoyl-adenylate intermediate. This Acidobacterium capsulatum (strain ATCC 51196 / DSM 11244 / BCRC 80197 / JCM 7670 / NBRC 15755 / NCIMB 13165 / 161) protein is Pantothenate synthetase.